The sequence spans 207 residues: Ubiquinol-cytochrome c reductase iron-sulfur subunit (207 aa).

Residues 24–44 (LVAATSVVGAVGAGYALVPFV) form a helical membrane-spanning segment. In terms of domain architecture, Rieske spans 100 to 199 (PKLVDPTSEV…HVYLNDTTIL (100 aa)). [2Fe-2S] cluster-binding residues include Cys-134, His-136, Cys-162, and His-165. Cys-139 and Cys-164 form a disulfide bridge.

In terms of assembly, the main subunits of complex b-c1 are: cytochrome b, cytochrome c1 and the Rieske protein. It depends on [2Fe-2S] cluster as a cofactor.

It is found in the cell membrane. It catalyses the reaction a quinol + 2 Fe(III)-[cytochrome c](out) = a quinone + 2 Fe(II)-[cytochrome c](out) + 2 H(+)(out). Component of the ubiquinol-cytochrome c reductase complex (complex III or cytochrome b-c1 complex), which is a respiratory chain that generates an electrochemical potential coupled to ATP synthesis. In Allochromatium vinosum (strain ATCC 17899 / DSM 180 / NBRC 103801 / NCIMB 10441 / D) (Chromatium vinosum), this protein is Ubiquinol-cytochrome c reductase iron-sulfur subunit (petA).